The following is a 464-amino-acid chain: MGKRLLDKLWERHVVTTNENGLDLLYIDLHLVHEVTSPQAFEGLRLTNRKVRRPDLTFATMDHNIPTKDVWNITDRIAKQQLDTLRANCKQFQVPLADIGDEEQGIVHVIGPELGLTQPGKTIVCGDSHTATHGAFGALAFGIGTSEVEHVLATQTLWQRKPKAMGIELKGKLQKGVYAKDIILHLLSKYGVAVGTGYVMEFYGETIGAMEMEERMTLCNMAIEGGAKAGIIAPDEKTFVYVKGRKYAPRDYETFEKKWFELYTDADAIYDLHISIDVTDLAPYVTWGTNPSMGVRIDEKLPEKHDVNDERAFSYMGLIPGQSTYDIPVQHVFIGSCTNSRLSDLEIAASVVKGRKVKEGVRALVVPGSKRVRDAAIQKGLHHIFEEAGFEWREPGCSMCLGMNPDQVPEGEHCASTSNRNFEGRQGKGARTHLVSPAMAAAAALYGHFVDTRKESYDGAISYS.

Residues Cys337, Cys397, and Cys400 each contribute to the [4Fe-4S] cluster site.

This sequence belongs to the aconitase/IPM isomerase family. LeuC type 1 subfamily. As to quaternary structure, heterodimer of LeuC and LeuD. The cofactor is [4Fe-4S] cluster.

It catalyses the reaction (2R,3S)-3-isopropylmalate = (2S)-2-isopropylmalate. It functions in the pathway amino-acid biosynthesis; L-leucine biosynthesis; L-leucine from 3-methyl-2-oxobutanoate: step 2/4. Catalyzes the isomerization between 2-isopropylmalate and 3-isopropylmalate, via the formation of 2-isopropylmaleate. The sequence is that of 3-isopropylmalate dehydratase large subunit from Bacillus thuringiensis subsp. konkukian (strain 97-27).